The sequence spans 224 residues: PKHD-type hydroxylase Shewana3_0717 (224 aa).

The region spanning 78-176 (QFYPPLFNRY…RTAAFMWLQS (99 aa)) is the Fe2OG dioxygenase domain. Residues H96, D98, and H157 each contribute to the Fe cation site. Position 167 (R167) interacts with 2-oxoglutarate.

It depends on Fe(2+) as a cofactor. The cofactor is L-ascorbate.

This chain is PKHD-type hydroxylase Shewana3_0717, found in Shewanella sp. (strain ANA-3).